The following is a 245-amino-acid chain: Thioredoxin-like 1-2, chloroplastic (245 aa).

The N-terminal 92 residues, 1-92, are a transit peptide targeting the chloroplast; that stretch reads MDAISSLGTN…TNHNMLEIQS (92 aa). Positions 93 to 194 constitute a Thioredoxin domain; sequence ANHLVDSLLN…FKKALDKHGS (102 aa). Residues cysteine 117 and cysteine 120 each act as nucleophile in the active site. A disulfide bridge connects residues cysteine 117 and cysteine 120.

It belongs to the thioredoxin family.

It localises to the plastid. Its subcellular location is the chloroplast. Functionally, probable thiol-disulfide oxidoreductase that may participate in various redox reactions. This is Thioredoxin-like 1-2, chloroplastic from Arabidopsis thaliana (Mouse-ear cress).